The following is a 564-amino-acid chain: Dihydroxy-acid dehydratase (564 aa).

[2Fe-2S] cluster is bound at residue Cys-55. Asp-87 provides a ligand contact to Mg(2+). Cys-128 lines the [2Fe-2S] cluster pocket. Residues Asp-129 and Lys-130 each coordinate Mg(2+). Residue Lys-130 is modified to N6-carboxylysine. Cys-200 is a binding site for [2Fe-2S] cluster. Residue Glu-452 coordinates Mg(2+). Ser-478 (proton acceptor) is an active-site residue.

Belongs to the IlvD/Edd family. Homodimer. Requires [2Fe-2S] cluster as cofactor. It depends on Mg(2+) as a cofactor.

It catalyses the reaction (2R)-2,3-dihydroxy-3-methylbutanoate = 3-methyl-2-oxobutanoate + H2O. It carries out the reaction (2R,3R)-2,3-dihydroxy-3-methylpentanoate = (S)-3-methyl-2-oxopentanoate + H2O. It functions in the pathway amino-acid biosynthesis; L-isoleucine biosynthesis; L-isoleucine from 2-oxobutanoate: step 3/4. Its pathway is amino-acid biosynthesis; L-valine biosynthesis; L-valine from pyruvate: step 3/4. Functionally, functions in the biosynthesis of branched-chain amino acids. Catalyzes the dehydration of (2R,3R)-2,3-dihydroxy-3-methylpentanoate (2,3-dihydroxy-3-methylvalerate) into 2-oxo-3-methylpentanoate (2-oxo-3-methylvalerate) and of (2R)-2,3-dihydroxy-3-methylbutanoate (2,3-dihydroxyisovalerate) into 2-oxo-3-methylbutanoate (2-oxoisovalerate), the penultimate precursor to L-isoleucine and L-valine, respectively. The chain is Dihydroxy-acid dehydratase from Polaromonas sp. (strain JS666 / ATCC BAA-500).